Here is an 864-residue protein sequence, read N- to C-terminus: Paramyosin (864 aa).

Positions 1–30 (MSSLYRDLDSDVSSTRIVRHSYNVYRGSSP) are nonhelical region. Positions 31–853 (SSQNRLESRI…QTVRRSRSMS (823 aa)) form a coiled coil. A nonhelical region region spans residues 854-864 (VSREVTRVVRV).

This sequence belongs to the paramyosin family. In terms of assembly, homodimer. Phosphorylated. Most abundantly expressed in muscle tissues from byssus retractor and adductor muscles. Low expression in foot, gill, inner mantle and outer mantle.

It localises to the cytoplasm. It is found in the myofibril. In terms of biological role, paramyosin is a major structural component of many thick filaments isolated from invertebrate muscles. This is Paramyosin from Mytilus galloprovincialis (Mediterranean mussel).